A 256-amino-acid polypeptide reads, in one-letter code: tRNA (guanine-N(1)-)-methyltransferase (256 aa).

S-adenosyl-L-methionine-binding positions include Gly-113 and 132-137; that span reads VGDYVL.

It belongs to the RNA methyltransferase TrmD family. In terms of assembly, homodimer.

It localises to the cytoplasm. The catalysed reaction is guanosine(37) in tRNA + S-adenosyl-L-methionine = N(1)-methylguanosine(37) in tRNA + S-adenosyl-L-homocysteine + H(+). Functionally, specifically methylates guanosine-37 in various tRNAs. The sequence is that of tRNA (guanine-N(1)-)-methyltransferase from Coprothermobacter proteolyticus (strain ATCC 35245 / DSM 5265 / OCM 4 / BT).